The following is a 741-amino-acid chain: Mitofusin-1 (741 aa).

At 1–584 (MAEPVSPLKH…ASQEELMITL (584 aa)) the chain is on the cytoplasmic side. Residues 9–73 (KHFVLAKKAI…LSIIGEVLSR (65 aa)) are part of a helix bundle domain, formed by helices from N-terminal and C-terminal regions. One can recognise a Dynamin-type G domain in the interval 72–321 (SRRHMKVAFF…ARLQEFQNFE (250 aa)). The G1 motif stretch occupies residues 82–89 (GRTSSGKS). 85-90 (SSGKSS) is a binding site for GTP. The tract at residues 108–109 (IT) is G2 motif. Residues 178-181 (DSPG) are G3 motif. 237 to 240 (NRWD) is a binding site for GTP. A G4 motif region spans residues 237–240 (NRWD). A region of interest (G5 motif) is located at residue Glu-266. GTP-binding residues include Ser-284 and Lys-286. Positions 338–364 (EQHTIRAKQILATVKNIMDSVNLAAED) are part of a helix bundle domain, formed by helices from N-terminal and C-terminal regions. Residues 371–408 (EEREDQIDRLDFIRNQMNLLTLDVKKKIKEVTEEVANK) adopt a coiled-coil conformation. A helical membrane pass occupies residues 585–605 (VTGLASVTSRTSMGIIIVGGV). Topologically, residues 606–608 (IWK) are mitochondrial intermembrane. A helical membrane pass occupies residues 609–629 (TIGWKLLSVSLTMYGALYLYE). Topologically, residues 630 to 741 (RLSWTTHAKE…QFLPSSNEES (112 aa)) are cytoplasmic. Residues 679-734 (RLCQQVDITQKQLEEEIARLPKEIDQLEKIQNNSKLLRNKAVQLENELENFTKQFL) are a coiled coil. Residues 703-734 (DQLEKIQNNSKLLRNKAVQLENELENFTKQFL) are part of a helix bundle domain, formed by helices from N-terminal and C-terminal regions.

This sequence belongs to the TRAFAC class dynamin-like GTPase superfamily. Dynamin/Fzo/YdjA family. Mitofusin subfamily. Homodimer, also in the absence of bound GTP. Forms higher oligomers in the presence of a transition state GTP analog. Forms homomultimers and heteromultimers with MFN2. Oligomerization is essential for mitochondrion fusion. Component of a high molecular weight multiprotein complex. Interacts with VAT1. Interacts with THG1L; THG1L probably functions as a guanyl-nucleotide exchange factor/GEF, activating MFN1. Ubiquitinated by non-degradative ubiquitin by PRKN. Deubiquitination by USP30 inhibits mitochondrial fusion. Ubiquitinated by MARCHF5. When mitochondria are depolarized and dysfunctional, it is ubiquitinated by a SCF (SKP1-CUL1-F-box protein) E3 ubiquitin-protein ligase complex that contains FBXO7 and PRKN. In terms of tissue distribution, detected in kidney and heart (at protein level). Ubiquitous. Expressed at slightly higher level in kidney and heart. Isoform 2 may be overexpressed in some tumors, such as lung cancers.

Its subcellular location is the mitochondrion outer membrane. It is found in the cytoplasm. The catalysed reaction is GTP + H2O = GDP + phosphate + H(+). In terms of biological role, mitochondrial outer membrane GTPase that mediates mitochondrial clustering and fusion. Membrane clustering requires GTPase activity. It may involve a major rearrangement of the coiled coil domains. Mitochondria are highly dynamic organelles, and their morphology is determined by the equilibrium between mitochondrial fusion and fission events. Overexpression induces the formation of mitochondrial networks (in vitro). Has low GTPase activity. In Homo sapiens (Human), this protein is Mitofusin-1 (MFN1).